We begin with the raw amino-acid sequence, 342 residues long: Cathepsin B-like cysteine proteinase (342 aa).

The first 17 residues, 1 to 17, serve as a signal peptide directing secretion; it reads MLKIAVYIVSLFTFLEA. Positions 18–89 are cleaved as a propeptide — activation peptide; sequence HVTTRNNQRI…TVDHHDLNVE (72 aa). 6 disulfide bridges follow: Cys-103–Cys-132, Cys-115–Cys-159, Cys-151–Cys-217, Cys-152–Cys-155, Cys-188–Cys-221, and Cys-196–Cys-207. The active site involves Cys-118. Residues His-288 and Asn-308 contribute to the active site.

Belongs to the peptidase C1 family. Intestine (gut).

Its function is as follows. Thiol protease. Has a role as a digestive enzyme. The sequence is that of Cathepsin B-like cysteine proteinase (CATB) from Schistosoma japonicum (Blood fluke).